A 434-amino-acid polypeptide reads, in one-letter code: Lipoyl synthase, mitochondrial (434 aa).

The N-terminal 31 residues, 1 to 31 (MAASARGLRTLQSAHSSTTVPRLQLAVSRCY), are a transit peptide targeting the mitochondrion. The span at 34-54 (TTSPDPPITNSSNSSNSTPTP) shows a compositional bias: low complexity. The tract at residues 34 to 55 (TTSPDPPITNSSNSSNSTPTPK) is disordered. Residues Cys144, Cys149, Cys155, Cys175, Cys179, Cys182, and Ser390 each coordinate [4Fe-4S] cluster. Residues 158 to 379 (GSSKSAATAT…KERALEMGFL (222 aa)) enclose the Radical SAM core domain.

The protein belongs to the radical SAM superfamily. Lipoyl synthase family. The cofactor is [4Fe-4S] cluster.

It is found in the mitochondrion. The enzyme catalyses [[Fe-S] cluster scaffold protein carrying a second [4Fe-4S](2+) cluster] + N(6)-octanoyl-L-lysyl-[protein] + 2 oxidized [2Fe-2S]-[ferredoxin] + 2 S-adenosyl-L-methionine + 4 H(+) = [[Fe-S] cluster scaffold protein] + N(6)-[(R)-dihydrolipoyl]-L-lysyl-[protein] + 4 Fe(3+) + 2 hydrogen sulfide + 2 5'-deoxyadenosine + 2 L-methionine + 2 reduced [2Fe-2S]-[ferredoxin]. Its pathway is protein modification; protein lipoylation via endogenous pathway; protein N(6)-(lipoyl)lysine from octanoyl-[acyl-carrier-protein]: step 2/2. Catalyzes the radical-mediated insertion of two sulfur atoms into the C-6 and C-8 positions of the octanoyl moiety bound to the lipoyl domains of lipoate-dependent enzymes, thereby converting the octanoylated domains into lipoylated derivatives. In Paracoccidioides brasiliensis (strain Pb03), this protein is Lipoyl synthase, mitochondrial.